We begin with the raw amino-acid sequence, 535 residues long: Dual specificity calcium/calmodulin-dependent 3',5'-cyclic nucleotide phosphodiesterase 1B (535 aa).

The segment at 1 to 21 is disordered; the sequence is MELSPRSPPEMLESDCPSPLE. 2 positions are modified to phosphoserine: serine 7 and serine 14. Calmodulin-binding regions lie at residues 27-47 and 117-140; these read SKKM…QLEN and EKPK…MFRR. Residues 145-502 form the PDEase domain; that stretch reads VGPTYSTAVH…QKWKERAASG (358 aa). Residue histidine 222 is the Proton donor of the active site. Histidine 226, histidine 262, aspartate 263, and aspartate 369 together coordinate Zn(2+). Aspartate 263 is a binding site for Mg(2+). Disordered stretches follow at residues 444–474 and 495–535; these read QPLA…GDPN and WKER…GNLD. Polar residues predominate over residues 454–463; it reads KSQPSFQWRQ. Phosphoserine is present on residues serine 465 and serine 513.

The protein belongs to the cyclic nucleotide phosphodiesterase family. PDE1 subfamily. Homodimer. Requires Zn(2+) as cofactor. Mg(2+) serves as cofactor.

Its subcellular location is the cytoplasm. The protein localises to the cytosol. It carries out the reaction a nucleoside 3',5'-cyclic phosphate + H2O = a nucleoside 5'-phosphate + H(+). It catalyses the reaction 3',5'-cyclic GMP + H2O = GMP + H(+). The catalysed reaction is 3',5'-cyclic AMP + H2O = AMP + H(+). With respect to regulation, type I PDE are activated by the binding of calmodulin in the presence of Ca(2+). Functionally, cyclic nucleotide phosphodiesterase with a dual specificity for the second messengers cAMP and cGMP, which are key regulators of many important physiological processes. Has a preference for cGMP as a substrate. This chain is Dual specificity calcium/calmodulin-dependent 3',5'-cyclic nucleotide phosphodiesterase 1B, found in Mus musculus (Mouse).